The sequence spans 667 residues: NADPH--cytochrome P450 reductase (667 aa).

Over 1 to 8 the chain is Lumenal; that stretch reads MEILESID. The helical transmembrane segment at 9–29 threads the bilayer; sequence FIEVLILDNLGAIIIVAVIVG. Residues 30 to 667 lie on the Cytoplasmic side of the membrane; it reads TYLYMNKPPP…HGRYLQDVWF (638 aa). Positions 72–215 constitute a Flavodoxin-like domain; sequence MKIFFGTQTR…DFNRWKKDMW (144 aa). FMN-binding positions include 164 to 173 and Asp-199; that span reads LGNKTYEHYN. Residues 277-511 enclose the FAD-binding FR-type domain; that stretch reads KNPYYAEVLE…FVRESHFKLP (235 aa). Position 297 (Arg-297) interacts with NADP(+). FAD-binding positions include 468 to 470 and 484 to 487; these read TSV and GVAS. Residues Thr-527, 586-587, and 592-596 each bind NADP(+); these read SR and KVYVQ. An FAD-binding site is contributed by Trp-666.

Belongs to the NADPH--cytochrome P450 reductase family. The protein in the N-terminal section; belongs to the flavodoxin family. This sequence in the C-terminal section; belongs to the flavoprotein pyridine nucleotide cytochrome reductase family. Requires FAD as cofactor. It depends on FMN as a cofactor.

The protein localises to the endoplasmic reticulum membrane. It carries out the reaction 2 oxidized [cytochrome P450] + NADPH = 2 reduced [cytochrome P450] + NADP(+) + H(+). Functionally, this enzyme is required for electron transfer from NADP to cytochrome P450 in microsomes. It can also provide electron transfer to heme oxygenase and cytochrome B5. In Dictyostelium discoideum (Social amoeba), this protein is NADPH--cytochrome P450 reductase (redB).